The following is a 127-amino-acid chain: Putative platinum sensitivity protein 1 (127 aa).

This is Putative platinum sensitivity protein 1 (PSY1) from Saccharomyces cerevisiae (strain ATCC 204508 / S288c) (Baker's yeast).